The following is a 395-amino-acid chain: Putative phosphatidate cytidylyltransferase (395 aa).

The next 9 helical transmembrane spans lie at 13–33 (STVF…SAFA), 78–98 (FAFG…MNWE), 115–135 (SLLS…VIYF), 144–164 (WIWT…YMIS), 177–197 (IYSL…YFSV), 201–221 (WTTI…AYLF), 242–262 (AFFG…LYSI), 306–326 (FYIY…IFAI), and 358–378 (FDSS…AGIS).

The protein belongs to the CDS family.

The protein localises to the cell membrane. It catalyses the reaction a 1,2-diacyl-sn-glycero-3-phosphate + CTP + H(+) = a CDP-1,2-diacyl-sn-glycerol + diphosphate. It functions in the pathway phospholipid metabolism; CDP-diacylglycerol biosynthesis; CDP-diacylglycerol from sn-glycerol 3-phosphate: step 3/3. The protein is Putative phosphatidate cytidylyltransferase (cdsA) of Mycoplasma pneumoniae (strain ATCC 29342 / M129 / Subtype 1) (Mycoplasmoides pneumoniae).